The following is a 490-amino-acid chain: Transcription factor lin-26 (490 aa).

Disordered stretches follow at residues 96–176 (KYKD…PLHQ), 236–262 (TPEY…EPDS), and 302–326 (ASKP…KKHR). The PEST stretch occupies residues 101–110 (SSSPESPSTT). The segment covering 101 to 120 (SSSPESPSTTASTAAQHTPP) has biased composition (low complexity). Polar residues-rich tracts occupy residues 123 to 132 (AVSTPTSINT) and 151 to 176 (NLST…PLHQ). Residues 236-260 (TPEYDDNHHSETISKASSEDLKTEP) are compositionally biased toward basic and acidic residues. The C2H2-type; degenerate zinc finger occupies 353 to 381 (YKCALCGKPTTLNSTGSRWNLLRHVIMIH).

In terms of tissue distribution, expressed in somatic gonads and germline precursors until the 50-cell stage. After the 100-cell stage, expression is seen in differentiating hypodermal and support cells (at protein level).

The protein resides in the nucleus. Functionally, probable transcription factor. Required to specify the fates of hypodermal and neuron-associated support cells. Functions during vulval development, playing a role in vulval precursor cell fate specification. Positively modulates expression of homeobox protein lin-39, perhaps by binding to regulatory regions of the lin-39 gene, acting in the vulval lineage. This is Transcription factor lin-26 from Caenorhabditis elegans.